We begin with the raw amino-acid sequence, 225 residues long: Ribosomal RNA small subunit methyltransferase G (225 aa).

S-adenosyl-L-methionine is bound by residues G71, L76, A121 to E122, and R139. The segment at V204–R225 is disordered.

Belongs to the methyltransferase superfamily. RNA methyltransferase RsmG family.

Its subcellular location is the cytoplasm. Functionally, specifically methylates the N7 position of guanine in position 518 of 16S rRNA. The chain is Ribosomal RNA small subunit methyltransferase G from Mycobacterium sp. (strain KMS).